The primary structure comprises 486 residues: Protein hold'em (486 aa).

A DNA-binding region (OB) is located at residues 166–285 (IITTNVNLLV…DCRLLLAFAA (120 aa)).

This sequence belongs to the MEIOB family. As to quaternary structure, interacts with mei-9 and Ercc1.

Its function is as follows. Single-stranded DNA-binding protein required for meiosis. May be involved in the resolution of recombination intermediates into crossovers in the meiotic recombination pathway. The chain is Protein hold'em (hdm) from Drosophila melanogaster (Fruit fly).